The primary structure comprises 224 residues: UPF0502 protein Psyr_2419 (224 aa).

Belongs to the UPF0502 family.

The chain is UPF0502 protein Psyr_2419 from Pseudomonas syringae pv. syringae (strain B728a).